We begin with the raw amino-acid sequence, 760 residues long: H(+)/Cl(-) exchange transporter 4 (760 aa).

Over 1–67 (MVNAGAMSGS…WEFIKSLLDA (67 aa)) the chain is Cytoplasmic. The tract at residues 14–63 (MDFLDEPFPDVGTYEDFHTIDWLREKSRDTDRHRKITSKSKESIWEFIKS) is required for localization in the endoplasmic reticulum. 2 helical membrane-spanning segments follow: residues 68–105 (WSGW…VCLS) and 151–174 (LNYL…VRVF). A Selectivity filter part_1 motif is present at residues 180–184 (GSGIP). A chloride-binding site is contributed by S181. The segment at residues 183 to 190 (IPEIKTIL) is an intramembrane region (helical). Helical transmembrane passes span 200-218 (GKWT…VSSG) and 224-243 (EGPL…SLFS). Residues 222–226 (GKEGP) carry the Selectivity filter part_2 motif. 2 consecutive intramembrane regions (helical) follow at residues 255 to 267 (VLSA…VSVA) and 271 to 279 (PIGGVLFSL). A run of 5 helical transmembrane segments spans residues 291-309 (LWRS…RSIN), 333-358 (FPFI…AWCR), 365-385 (LGKY…IIAY), 442-462 (MWQL…TFGM), and 467-486 (GLFI…VGIG). A Selectivity filter part_3 motif is present at residues 467-471 (GLFIP). Position 469 (F469) interacts with chloride. 2 consecutive intramembrane regions (helical) follow at residues 514–528 (GLYA…LGGV) and 532–543 (TVSLVVIMFELT). The segment at residues 544–547 (GGLE) is an intramembrane region (note=Loop between two helices). The chain crosses the membrane as a helical span at residues 548–566 (YIVPLMAAAVTSKWVADAF). The Cytoplasmic segment spans residues 567–760 (GKEGIYEAHI…NQDPESIMFN (194 aa)). Y572 lines the chloride pocket. Positions 600-666 (MRPRRGEPPL…AIKNARQRQE (67 aa)) constitute a CBS 1 domain. ATP contacts are provided by residues S610 and 631–633 (YNG). The segment at 667-696 (GIVSNSIMYFTEEPPELPANSPHPLKLRRI) is required for localization in the endoplasmic reticulum. Positions 697-755 (LNLSPFTVTDHTPMETVVDIFRKLGLRQCLVTRSGRLLGIITKKDVLRHMAQMANQDPE) constitute a CBS 2 domain. Position 738–741 (738–741 (TKKD)) interacts with ATP.

It belongs to the chloride channel (TC 2.A.49) family. ClC-4/CLCN4 subfamily. Monomer. Forms heterodimers with CLCN3. In terms of tissue distribution, abundant in skeletal muscle and also detectable in brain and heart.

The protein resides in the early endosome membrane. Its subcellular location is the late endosome membrane. The protein localises to the endoplasmic reticulum membrane. It is found in the lysosome membrane. It localises to the recycling endosome membrane. In terms of biological role, strongly outwardly rectifying, electrogenic H(+)/Cl(-)exchanger which mediates the exchange of chloride ions against protons. The CLC channel family contains both chloride channels and proton-coupled anion transporters that exchange chloride or another anion for protons. The presence of conserved gating glutamate residues is typical for family members that function as antiporters. This is H(+)/Cl(-) exchange transporter 4 (CLCN4) from Homo sapiens (Human).